A 171-amino-acid polypeptide reads, in one-letter code: MPYSLEEQTYFMQEALKEAEKSLQKAEIPIGCVIVKDGEIIGRGHNAREESNQAIMHAEMMAINEANAHEGNWRLLDTTLFVTIEPCVMCSGAIGLARIPHVIYGASNQKFGGVDSLYQILTDERLNHRVQVERGLLAADCANIMQTFFRQGRERKKIAKHLIKEQSDPFD.

Residues 6–133 enclose the CMP/dCMP-type deaminase domain; that stretch reads EEQTYFMQEA…ERLNHRVQVE (128 aa). His-57 provides a ligand contact to Zn(2+). Residue Glu-59 is the Proton donor of the active site. Residues Cys-87 and Cys-90 each contribute to the Zn(2+) site.

This sequence belongs to the cytidine and deoxycytidylate deaminase family. In terms of assembly, homodimer. Requires Zn(2+) as cofactor.

It catalyses the reaction adenosine(34) in tRNA + H2O + H(+) = inosine(34) in tRNA + NH4(+). Catalyzes the deamination of adenosine to inosine at the wobble position 34 of tRNA(Arg2). The chain is tRNA-specific adenosine deaminase from Streptococcus pyogenes serotype M1.